The following is a 287-amino-acid chain: 2-dehydro-3-deoxyphosphooctonate aldolase (287 aa).

This sequence belongs to the KdsA family.

It is found in the cytoplasm. It carries out the reaction D-arabinose 5-phosphate + phosphoenolpyruvate + H2O = 3-deoxy-alpha-D-manno-2-octulosonate-8-phosphate + phosphate. It participates in carbohydrate biosynthesis; 3-deoxy-D-manno-octulosonate biosynthesis; 3-deoxy-D-manno-octulosonate from D-ribulose 5-phosphate: step 2/3. It functions in the pathway bacterial outer membrane biogenesis; lipopolysaccharide biosynthesis. This Rhodopseudomonas palustris (strain TIE-1) protein is 2-dehydro-3-deoxyphosphooctonate aldolase.